The following is a 118-amino-acid chain: Large ribosomal subunit protein bL19 (118 aa).

The protein belongs to the bacterial ribosomal protein bL19 family.

This protein is located at the 30S-50S ribosomal subunit interface and may play a role in the structure and function of the aminoacyl-tRNA binding site. In Frankia casuarinae (strain DSM 45818 / CECT 9043 / HFP020203 / CcI3), this protein is Large ribosomal subunit protein bL19.